Reading from the N-terminus, the 242-residue chain is ATP-dependent dethiobiotin synthetase BioD (242 aa).

Residue 12 to 17 coordinates ATP; that stretch reads EVGKTV. Thr16 is a Mg(2+) binding site. The active site involves Lys37. Substrate is bound at residue Ser41. ATP contacts are provided by residues Asp51 and 112–115; that span reads EGAG. Positions 51 and 112 each coordinate Mg(2+).

It belongs to the dethiobiotin synthetase family. As to quaternary structure, homodimer. It depends on Mg(2+) as a cofactor.

It is found in the cytoplasm. The catalysed reaction is (7R,8S)-7,8-diammoniononanoate + CO2 + ATP = (4R,5S)-dethiobiotin + ADP + phosphate + 3 H(+). It participates in cofactor biosynthesis; biotin biosynthesis; biotin from 7,8-diaminononanoate: step 1/2. Catalyzes a mechanistically unusual reaction, the ATP-dependent insertion of CO2 between the N7 and N8 nitrogen atoms of 7,8-diaminopelargonic acid (DAPA, also called 7,8-diammoniononanoate) to form a ureido ring. In Bacillus thuringiensis (strain Al Hakam), this protein is ATP-dependent dethiobiotin synthetase BioD.